A 115-amino-acid polypeptide reads, in one-letter code: Beta-2-microglobulin (115 aa).

The first 16 residues, 1 to 16, serve as a signal peptide directing secretion; sequence MKIALVLLSLLALTLA. Positions 22 to 113 constitute an Ig-like C1-type domain; it reads PPVVKVYTAE…GNPSKKYRLD (92 aa).

This sequence belongs to the beta-2-microglobulin family. As to quaternary structure, heterodimer of an alpha chain and a beta chain. Beta-2-microglobulin is the beta-chain of major histocompatibility complex class I molecules.

Its subcellular location is the secreted. Its function is as follows. Component of the class I major histocompatibility complex (MHC). Involved in the presentation of peptide antigens to the immune system. This chain is Beta-2-microglobulin (b2m), found in Xenopus laevis (African clawed frog).